The primary structure comprises 682 residues: Tail-specific protease (682 aa).

Residues 1 to 22 (MNMFFRLTALAGLLAIAGQTFA) form the signal peptide. Residues 238–322 (NTEMSLSLEG…SKVRLEILPA (85 aa)) form the PDZ domain. Residues S452, D463, and K477 each act as charge relay system in the active site. Positions 635-650 (GKPELKKLDDLPKDYQ) are enriched in basic and acidic residues. The tract at residues 635–654 (GKPELKKLDDLPKDYQEPDP) is disordered.

This sequence belongs to the peptidase S41A family.

It is found in the cell inner membrane. The enzyme catalyses The enzyme shows specific recognition of a C-terminal tripeptide, Xaa-Yaa-Zaa, in which Xaa is preferably Ala or Leu, Yaa is preferably Ala or Tyr, and Zaa is preferably Ala, but then cleaves at a variable distance from the C-terminus. A typical cleavage is -Ala-Ala-|-Arg-Ala-Ala-Lys-Glu-Asn-Tyr-Ala-Leu-Ala-Ala.. Functionally, involved in the cleavage of a C-terminal peptide of 11 residues from the precursor form of penicillin-binding protein 3 (PBP3). May be involved in protection of the bacterium from thermal and osmotic stresses. The protein is Tail-specific protease (prc) of Escherichia coli (strain K12).